The sequence spans 171 residues: Shikimate kinase (171 aa).

An ATP-binding site is contributed by 14–19 (GAGKST). Ser-18 is a Mg(2+) binding site. The substrate site is built by Asp-36, Arg-60, and Gly-82. Arg-120 is a binding site for ATP. Arg-139 serves as a coordination point for substrate. Position 156 (Gln-156) interacts with ATP.

The protein belongs to the shikimate kinase family. In terms of assembly, monomer. It depends on Mg(2+) as a cofactor.

The protein localises to the cytoplasm. The catalysed reaction is shikimate + ATP = 3-phosphoshikimate + ADP + H(+). It participates in metabolic intermediate biosynthesis; chorismate biosynthesis; chorismate from D-erythrose 4-phosphate and phosphoenolpyruvate: step 5/7. Catalyzes the specific phosphorylation of the 3-hydroxyl group of shikimic acid using ATP as a cosubstrate. This is Shikimate kinase from Shewanella denitrificans (strain OS217 / ATCC BAA-1090 / DSM 15013).